The primary structure comprises 483 residues: ATP synthase subunit beta (483 aa).

An ATP-binding site is contributed by 169–176; sequence GGAGVGKT.

This sequence belongs to the ATPase alpha/beta chains family. As to quaternary structure, F-type ATPases have 2 components, CF(1) - the catalytic core - and CF(0) - the membrane proton channel. CF(1) has five subunits: alpha(3), beta(3), gamma(1), delta(1), epsilon(1). CF(0) has three main subunits: a(1), b(2) and c(9-12). The alpha and beta chains form an alternating ring which encloses part of the gamma chain. CF(1) is attached to CF(0) by a central stalk formed by the gamma and epsilon chains, while a peripheral stalk is formed by the delta and b chains.

The protein resides in the cell membrane. The enzyme catalyses ATP + H2O + 4 H(+)(in) = ADP + phosphate + 5 H(+)(out). In terms of biological role, produces ATP from ADP in the presence of a proton gradient across the membrane. The catalytic sites are hosted primarily by the beta subunits. The protein is ATP synthase subunit beta of Corynebacterium glutamicum (strain ATCC 13032 / DSM 20300 / JCM 1318 / BCRC 11384 / CCUG 27702 / LMG 3730 / NBRC 12168 / NCIMB 10025 / NRRL B-2784 / 534).